The chain runs to 200 residues: Holliday junction branch migration complex subunit RuvA (200 aa).

Residues methionine 1–serine 65 form a domain I region. Residues serine 66 to proline 144 form a domain II region. The interval valine 145 to serine 149 is flexible linker. Residues threonine 150–serine 200 form a domain III region.

The protein belongs to the RuvA family. In terms of assembly, homotetramer. Forms an RuvA(8)-RuvB(12)-Holliday junction (HJ) complex. HJ DNA is sandwiched between 2 RuvA tetramers; dsDNA enters through RuvA and exits via RuvB. An RuvB hexamer assembles on each DNA strand where it exits the tetramer. Each RuvB hexamer is contacted by two RuvA subunits (via domain III) on 2 adjacent RuvB subunits; this complex drives branch migration. In the full resolvosome a probable DNA-RuvA(4)-RuvB(12)-RuvC(2) complex forms which resolves the HJ.

It localises to the cytoplasm. Its function is as follows. The RuvA-RuvB-RuvC complex processes Holliday junction (HJ) DNA during genetic recombination and DNA repair, while the RuvA-RuvB complex plays an important role in the rescue of blocked DNA replication forks via replication fork reversal (RFR). RuvA specifically binds to HJ cruciform DNA, conferring on it an open structure. The RuvB hexamer acts as an ATP-dependent pump, pulling dsDNA into and through the RuvAB complex. HJ branch migration allows RuvC to scan DNA until it finds its consensus sequence, where it cleaves and resolves the cruciform DNA. This Chlamydia trachomatis serovar L2 (strain ATCC VR-902B / DSM 19102 / 434/Bu) protein is Holliday junction branch migration complex subunit RuvA.